The chain runs to 81 residues: Putative defensin-like protein 26 (81 aa).

A signal peptide spans 1 to 21; the sequence is MASLKVFSFALLIVLTFSVIG. 2 disulfides stabilise this stretch: C33-C81 and C52-C77.

This sequence belongs to the DEFL family.

The protein resides in the secreted. This chain is Putative defensin-like protein 26, found in Arabidopsis thaliana (Mouse-ear cress).